The primary structure comprises 277 residues: Anamorsin homolog (277 aa).

An N-terminal SAM-like domain region spans residues 1–134; sequence MALQGNVAIL…PFYPEFSDAV (134 aa). The tract at residues 135–191 is linker; that stretch reads SFTSKKQSFESAAIPLAVKSTTTQPIKKWTVLADDFGDDQDDDIIDEDTLLDDTDEV. Residues cysteine 199, cysteine 210, cysteine 213, and cysteine 215 each contribute to the [2Fe-2S] cluster site. The tract at residues 199–215 is fe-S binding site A; that stretch reads CGDAVGGKKRACKNCTC. [4Fe-4S] cluster is bound by residues cysteine 238, cysteine 241, cysteine 249, and cysteine 252. 2 consecutive short sequence motifs (cx2C motif) follow at residues 238 to 241 and 249 to 252; these read CGNC and CGSC. Residues 238 to 252 are fe-S binding site B; the sequence is CGNCFKGDAFRCGSC.

This sequence belongs to the anamorsin family. As to quaternary structure, monomer. It depends on [2Fe-2S] cluster as a cofactor. [4Fe-4S] cluster serves as cofactor.

It is found in the cytoplasm. The protein localises to the mitochondrion intermembrane space. Component of the cytosolic iron-sulfur (Fe-S) protein assembly (CIA) machinery. Required for the maturation of extramitochondrial Fe-S proteins. Part of an electron transfer chain functioning in an early step of cytosolic Fe-S biogenesis, facilitating the de novo assembly of a [4Fe-4S] cluster on the cytosolic Fe-S scaffold complex. Electrons are transferred from NADPH via a FAD- and FMN-containing diflavin oxidoreductase. Together with the diflavin oxidoreductase, also required for the assembly of the diferric tyrosyl radical cofactor of ribonucleotide reductase (RNR), probably by providing electrons for reduction during radical cofactor maturation in the catalytic small subunit. This is Anamorsin homolog from Phytophthora infestans (strain T30-4) (Potato late blight agent).